The primary structure comprises 530 residues: UDP-glucuronosyltransferase 2B17 (530 aa).

The N-terminal stretch at 1-23 is a signal peptide; the sequence is MPGKWISALLLLQISCCFRSVKC. Asparagine 316 and asparagine 483 each carry an N-linked (GlcNAc...) asparagine glycan. Residues 494-510 traverse the membrane as a helical segment; the sequence is VIGFLLSCVATTIVLSV.

Belongs to the UDP-glycosyltransferase family.

The protein resides in the endoplasmic reticulum membrane. It carries out the reaction glucuronate acceptor + UDP-alpha-D-glucuronate = acceptor beta-D-glucuronoside + UDP + H(+). The catalysed reaction is 17alpha-estradiol + UDP-alpha-D-glucuronate = 17alpha-estradiol 3-O-(beta-D-glucuronate) + UDP + H(+). It catalyses the reaction 17alpha-estradiol + UDP-alpha-D-glucuronate = 17alpha-estradiol 17-O-(beta-D-glucuronate) + UDP + H(+). The enzyme catalyses 17beta-estradiol + UDP-alpha-D-glucuronate = 17beta-estradiol 17-O-(beta-D-glucuronate) + UDP + H(+). It carries out the reaction 17beta-hydroxy-5alpha-androstan-3-one + UDP-alpha-D-glucuronate = 5alpha-dihydrotestosterone 17-O-(beta-D-glucuronate) + UDP + H(+). The catalysed reaction is testosterone + UDP-alpha-D-glucuronate = testosterone 17-O-(beta-D-glucuronate) + UDP + H(+). In terms of biological role, UDP-glucuronosyltransferase (UGT) that catalyzes phase II biotransformation reactions in which lipophilic substrates are conjugated with glucuronic acid to increase the metabolite's water solubility, thereby facilitating excretion into either the urine or bile. Catalyzes the glucuronidation of endogenous steroid hormones such as androgens (epitestosterone, androsterone) and estrogens (estradiol, epiestradiol). This chain is UDP-glucuronosyltransferase 2B17, found in Mus musculus (Mouse).